The chain runs to 213 residues: ATP phosphoribosyltransferase (213 aa).

Belongs to the ATP phosphoribosyltransferase family. Short subfamily. Heteromultimer composed of HisG and HisZ subunits.

Its subcellular location is the cytoplasm. The enzyme catalyses 1-(5-phospho-beta-D-ribosyl)-ATP + diphosphate = 5-phospho-alpha-D-ribose 1-diphosphate + ATP. It functions in the pathway amino-acid biosynthesis; L-histidine biosynthesis; L-histidine from 5-phospho-alpha-D-ribose 1-diphosphate: step 1/9. Its function is as follows. Catalyzes the condensation of ATP and 5-phosphoribose 1-diphosphate to form N'-(5'-phosphoribosyl)-ATP (PR-ATP). Has a crucial role in the pathway because the rate of histidine biosynthesis seems to be controlled primarily by regulation of HisG enzymatic activity. This chain is ATP phosphoribosyltransferase, found in Synechococcus sp. (strain RCC307).